We begin with the raw amino-acid sequence, 431 residues long: Probable indole-3-pyruvate monooxygenase YUCCA7 (431 aa).

36 to 41 serves as a coordination point for FAD; the sequence is GAGPSG. Residue 207 to 212 coordinates NADP(+); it reads GCGNSG.

It belongs to the FMO family. It depends on FAD as a cofactor. As to expression, expressed in shoot apex regions and siliques, and at high levels in roots. Detected in flowers, stems and leaves.

It catalyses the reaction indole-3-pyruvate + NADPH + O2 + H(+) = (indol-3-yl)acetate + CO2 + NADP(+) + H2O. It functions in the pathway plant hormone metabolism; auxin biosynthesis. Involved in auxin biosynthesis. Belongs to the set of redundant YUCCA genes probably responsible for auxin biosynthesis in roots. The polypeptide is Probable indole-3-pyruvate monooxygenase YUCCA7 (YUC7) (Arabidopsis thaliana (Mouse-ear cress)).